The chain runs to 467 residues: Proton extrusion protein PxcA (467 aa).

A disordered region spans residues 183 to 205; sequence TSPPQLIRPRTEQNKKPRGKADT. Positions 191–203 are enriched in basic and acidic residues; that stretch reads PRTEQNKKPRGKA. A run of 4 helical transmembrane segments spans residues 249-269, 352-372, 391-411, and 427-447; these read FILL…ALIV, IFSV…IMVL, IIIL…WEVI, and FIFL…KYWI.

This sequence belongs to the CemA family.

It localises to the cell inner membrane. Required for H(+) efflux immediately after light irradiation to form a rapid H(+) concentration gradient across the thylakoid membranes. Together with PxcL, contributes to transient H(+) uptake following dark to light transition. This is Proton extrusion protein PxcA from Trichormus variabilis (strain ATCC 29413 / PCC 7937) (Anabaena variabilis).